We begin with the raw amino-acid sequence, 271 residues long: MASAGSLDVPERGHQRPFLIGVSGGTASGKSTVCEKIMELLGQNEVDHRQRKVVILSQDRFYKVLTPEQKTRALKGQYNFDHPDAFDNELMHRTLTQILEGQIVDVPMYDFITHSRLPETTTVYPADVLLFEGILAFYNQEIRDMFQLKLFVDTDSDVRLSRRVLRDMKRGRDLEQILTQYTTFVKPAFEEFSLPTKKYADVIIPRGVDNMVAINLIVQHIQDILNGDICKWQRGVLNGRSQKRTFPGQGESGGLILPGKRTHLESSSRPH.

24-32 (GGTASGKST) is a binding site for ATP. Residues Asp81, Tyr109, His114, Arg163, Arg172, and Gln180 each contribute to the substrate site. Asp209 is an ATP binding site. The interval 241–271 (SQKRTFPGQGESGGLILPGKRTHLESSSRPH) is disordered. Residues 262-271 (THLESSSRPH) are compositionally biased toward basic and acidic residues.

It belongs to the uridine kinase family.

The catalysed reaction is uridine + ATP = UMP + ADP + H(+). It carries out the reaction cytidine + ATP = CMP + ADP + H(+). Its pathway is pyrimidine metabolism; CTP biosynthesis via salvage pathway; CTP from cytidine: step 1/3. It functions in the pathway pyrimidine metabolism; UMP biosynthesis via salvage pathway; UMP from uridine: step 1/1. Phosphorylates uridine and cytidine to uridine monophosphate and cytidine monophosphate. Does not phosphorylate deoxyribonucleosides or purine ribonucleosides. Can use ATP or GTP as a phosphate donor. The sequence is that of Uridine-cytidine kinase 1-A (uck1-a) from Xenopus laevis (African clawed frog).